A 160-amino-acid polypeptide reads, in one-letter code: ATP synthase subunit b (160 aa).

Residues 13-33 form a helical membrane-spanning segment; that stretch reads VNLAIVIGVLVWFLRGFLGGI.

It belongs to the ATPase B chain family. In terms of assembly, F-type ATPases have 2 components, F(1) - the catalytic core - and F(0) - the membrane proton channel. F(1) has five subunits: alpha(3), beta(3), gamma(1), delta(1), epsilon(1). F(0) has four main subunits: a(1), b(1), b'(1) and c(10-14). The alpha and beta chains form an alternating ring which encloses part of the gamma chain. F(1) is attached to F(0) by a central stalk formed by the gamma and epsilon chains, while a peripheral stalk is formed by the delta, b and b' chains.

The protein resides in the cellular thylakoid membrane. Functionally, f(1)F(0) ATP synthase produces ATP from ADP in the presence of a proton or sodium gradient. F-type ATPases consist of two structural domains, F(1) containing the extramembraneous catalytic core and F(0) containing the membrane proton channel, linked together by a central stalk and a peripheral stalk. During catalysis, ATP synthesis in the catalytic domain of F(1) is coupled via a rotary mechanism of the central stalk subunits to proton translocation. Component of the F(0) channel, it forms part of the peripheral stalk, linking F(1) to F(0). The chain is ATP synthase subunit b from Parasynechococcus marenigrum (strain WH8102).